Reading from the N-terminus, the 335-residue chain is Acetyl-coenzyme A carboxylase carboxyl transferase subunit alpha (335 aa).

Residues 40–294 form the CoA carboxyltransferase C-terminal domain; sequence QLETLATRRR…KEAIEKHLDT (255 aa).

It belongs to the AccA family. As to quaternary structure, acetyl-CoA carboxylase is a heterohexamer composed of biotin carboxyl carrier protein (AccB), biotin carboxylase (AccC) and two subunits each of ACCase subunit alpha (AccA) and ACCase subunit beta (AccD).

The protein resides in the cytoplasm. It catalyses the reaction N(6)-carboxybiotinyl-L-lysyl-[protein] + acetyl-CoA = N(6)-biotinyl-L-lysyl-[protein] + malonyl-CoA. Its pathway is lipid metabolism; malonyl-CoA biosynthesis; malonyl-CoA from acetyl-CoA: step 1/1. Functionally, component of the acetyl coenzyme A carboxylase (ACC) complex. First, biotin carboxylase catalyzes the carboxylation of biotin on its carrier protein (BCCP) and then the CO(2) group is transferred by the carboxyltransferase to acetyl-CoA to form malonyl-CoA. The protein is Acetyl-coenzyme A carboxylase carboxyl transferase subunit alpha of Prochlorococcus marinus (strain MIT 9312).